The sequence spans 218 residues: 3-dehydroquinate dehydratase (218 aa).

Residues 29–31 (EFR) and Arg-56 each bind 3-dehydroquinate. His-116 serves as the catalytic Proton donor/acceptor. Catalysis depends on Lys-142, which acts as the Schiff-base intermediate with substrate. Arg-180, Ser-200, and Gln-204 together coordinate 3-dehydroquinate.

It belongs to the type-I 3-dehydroquinase family. As to quaternary structure, homodimer.

It carries out the reaction 3-dehydroquinate = 3-dehydroshikimate + H2O. Its pathway is metabolic intermediate biosynthesis; chorismate biosynthesis; chorismate from D-erythrose 4-phosphate and phosphoenolpyruvate: step 3/7. In terms of biological role, involved in the third step of the chorismate pathway, which leads to the biosynthesis of aromatic amino acids. Catalyzes the cis-dehydration of 3-dehydroquinate (DHQ) and introduces the first double bond of the aromatic ring to yield 3-dehydroshikimate. The polypeptide is 3-dehydroquinate dehydratase (Methanococcus maripaludis (strain C7 / ATCC BAA-1331)).